Here is a 442-residue protein sequence, read N- to C-terminus: MKSEINIFALATAPFNSALHIIRFSGPDVYEILNKITNKKITRKGMQIQRTWIVDENNKRIDDVLLFKFVSPNSYTGEDLIEISCHGNMLIVNEICALLLKKGGVYAKPGEFTQRSFLNGKMSLQQASAVNKLILSPNLLVKDIVLNNLAGEMDQQLEQIAQQVNQLVMQMEVNIDYPEYLDEQVELSTLNNKVKLIIEKLKRIIENSKQLKKLHDPFKIAIIGETNVGKSSLLNALLNQDKAIVSNIKGSTRDVVEGDFNLNGYLIKILDTAGIRKHKSGLEKAGIKKSFESIKQANLVIYLLDATHPKKDLELISFFKKNKKDFFVFYNKKDLITNKFENSISAKQKDIKELVDLLTKYINEFYKKIDQKIYLIENWQQILIEKIKEQLEQFLKQQKKYLFFDVLVTHLREAQQDILKLLGKDVGFDLVNEIFNNFCLGK.

The (6S)-5-formyl-5,6,7,8-tetrahydrofolate site is built by Arg23, Glu82, and Lys121. Positions 217-363 constitute a TrmE-type G domain; the sequence is PFKIAIIGET…LVDLLTKYIN (147 aa). Asn227 lines the K(+) pocket. Residues 227-232, 246-252, and 271-274 each bind GTP; these read NVGKSS, SNIKGST, and DTAG. Ser231 lines the Mg(2+) pocket. The K(+) site is built by Ser246, Ile248, and Ser251. A Mg(2+)-binding site is contributed by Thr252. Position 442 (Lys442) interacts with (6S)-5-formyl-5,6,7,8-tetrahydrofolate.

It belongs to the TRAFAC class TrmE-Era-EngA-EngB-Septin-like GTPase superfamily. TrmE GTPase family. Homodimer. Heterotetramer of two MnmE and two MnmG subunits. K(+) is required as a cofactor.

It localises to the cytoplasm. Functionally, exhibits a very high intrinsic GTPase hydrolysis rate. Involved in the addition of a carboxymethylaminomethyl (cmnm) group at the wobble position (U34) of certain tRNAs, forming tRNA-cmnm(5)s(2)U34. The protein is tRNA modification GTPase MnmE of Mycoplasma genitalium (strain ATCC 33530 / DSM 19775 / NCTC 10195 / G37) (Mycoplasmoides genitalium).